A 333-amino-acid polypeptide reads, in one-letter code: Fructose-1,6-bisphosphatase class 1 1 (333 aa).

Residues E81, D100, L102, and D103 each coordinate Mg(2+). Residues 103–106 and N191 contribute to the substrate site; that span reads DGSS. A Mg(2+)-binding site is contributed by E263.

It belongs to the FBPase class 1 family. As to quaternary structure, homotetramer. Mg(2+) serves as cofactor.

Its subcellular location is the cytoplasm. The catalysed reaction is beta-D-fructose 1,6-bisphosphate + H2O = beta-D-fructose 6-phosphate + phosphate. The protein operates within carbohydrate biosynthesis; Calvin cycle. The polypeptide is Fructose-1,6-bisphosphatase class 1 1 (Cereibacter sphaeroides (strain ATCC 17023 / DSM 158 / JCM 6121 / CCUG 31486 / LMG 2827 / NBRC 12203 / NCIMB 8253 / ATH 2.4.1.) (Rhodobacter sphaeroides)).